The chain runs to 275 residues: Exosome complex component Rrp42 (275 aa).

The protein belongs to the RNase PH family. Rrp42 subfamily. In terms of assembly, component of the archaeal exosome complex. Forms a hexameric ring-like arrangement composed of 3 Rrp41-Rrp42 heterodimers. The hexameric ring associates with a trimer of Rrp4 and/or Csl4 subunits.

Its subcellular location is the cytoplasm. Its function is as follows. Non-catalytic component of the exosome, which is a complex involved in RNA degradation. Contributes to the structuring of the Rrp41 active site. The polypeptide is Exosome complex component Rrp42 (Saccharolobus islandicus (strain M.16.27) (Sulfolobus islandicus)).